Consider the following 166-residue polypeptide: Early E3 18.5 kDa glycoprotein (166 aa).

The first 19 residues, Met1–Ala19, serve as a signal peptide directing secretion. Residues Asn20–Ile131 lie on the Lumenal side of the membrane. Asn31 is a glycosylation site (N-linked (GlcNAc...) asparagine; by host). Disulfide bonds link Cys32/Cys50 and Cys44/Cys106. Asn63, Asn67, and Asn97 each carry an N-linked (GlcNAc...) asparagine; by host glycan. The helical transmembrane segment at Ala132 to Val152 threads the bilayer. The Cytoplasmic segment spans residues Thr153 to Pro166. The Di-lysine motif motif lies at Lys162–Pro166.

Belongs to the adenoviridae E19 family. In terms of processing, both disulfide bonds are absolutely critical for the interaction with MHC antigens. N-glycosylated; high-mannose.

The protein localises to the host endoplasmic reticulum membrane. Binds and retains class I heavy chains in the endoplasmic reticulum during the early period of virus infection, thereby impairing their transport to the cell surface. Also delays the expression of class I alleles that it cannot affect by direct retention. Binds transporters associated with antigen processing (TAP) and acts as a tapasin inhibitor, preventing class I/TAP association. In consequence, infected cells are masked for immune recognition by cytotoxic T-lymphocytes. The chain is Early E3 18.5 kDa glycoprotein from Human adenovirus B serotype 11 (strain BC34) (HAdV-11).